The following is a 497-amino-acid chain: Transcription termination/antitermination protein NusA (497 aa).

An S1 motif domain is found at 135 to 200 (GKILTGIVKK…RGAQLFVTRS (66 aa)). The KH domain maps to 302–372 (RHTIDIAVDS…LKIDQKISNI (71 aa)). A run of 2 repeats spans residues 364–414 (KIDQ…KKAL) and 439–489 (GMNQ…RNIC). The interval 364 to 489 (KIDQKISNIL…MLIMAARNIC (126 aa)) is 2 X 51 AA approximate repeats.

This sequence belongs to the NusA family. As to quaternary structure, monomer. Binds directly to the core enzyme of the DNA-dependent RNA polymerase and to nascent RNA.

The protein resides in the cytoplasm. Functionally, participates in both transcription termination and antitermination. The protein is Transcription termination/antitermination protein NusA of Buchnera aphidicola subsp. Baizongia pistaciae (strain Bp).